The sequence spans 168 residues: Endoribonuclease YbeY (168 aa).

3 residues coordinate Zn(2+): histidine 122, histidine 126, and histidine 132.

This sequence belongs to the endoribonuclease YbeY family. The cofactor is Zn(2+).

The protein localises to the cytoplasm. Single strand-specific metallo-endoribonuclease involved in late-stage 70S ribosome quality control and in maturation of the 3' terminus of the 16S rRNA. The protein is Endoribonuclease YbeY of Brucella abortus (strain 2308).